A 424-amino-acid chain; its full sequence is 26S proteasome regulatory subunit 6A homolog A (424 aa).

The disordered stretch occupies residues 1-21 (MATPMVEDTSSFEEDQLASMS). An N-acetylalanine modification is found at alanine 2. A Phosphoserine modification is found at serine 19. 212–219 (GPPGTGKT) contributes to the ATP binding site. Lysine 235 is covalently cross-linked (Glycyl lysine isopeptide (Lys-Gly) (interchain with G-Cter in ubiquitin)). Threonine 278 is modified (O-acetylthreonine). Glycyl lysine isopeptide (Lys-Gly) (interchain with G-Cter in ubiquitin) cross-links involve residues lysine 279 and lysine 416.

It belongs to the AAA ATPase family. As to quaternary structure, component of the 19S regulatory particle (RP/PA700) base subcomplex of the 26S proteasome. The 26S proteasome is composed of a core protease (CP), known as the 20S proteasome, capped at one or both ends by the 19S regulatory particle (RP/PA700). The RP/PA700 complex is composed of at least 17 different subunits in two subcomplexes, the base and the lid, which form the portions proximal and distal to the 20S proteolytic core, respectively. Ubiquitous.

Its subcellular location is the cytoplasm. The protein localises to the nucleus. Functionally, the 26S proteasome is involved in the ATP-dependent degradation of ubiquitinated proteins. The regulatory (or ATPase) complex confers ATP dependency and substrate specificity to the 26S complex. Interacts with transit peptides of proteins targeted to the chloroplast, and may be involved in the degradation of unimported plastid protein precursors. Plays a essential role in the gametophyte development. Involved in tolerance to zinc deficiency, possibly through alleviation of oxidative stresses or processing of poly-ubiquitinated proteins. This chain is 26S proteasome regulatory subunit 6A homolog A, found in Arabidopsis thaliana (Mouse-ear cress).